The primary structure comprises 482 residues: GTPase Der (482 aa).

EngA-type G domains are found at residues 3 to 166 (PVVA…SEQF) and 195 to 368 (IKLA…NSAT). Residues 9-16 (GRPNVGKS), 56-60 (DTGGI), 118-121 (NKVD), 201-208 (GKPNVGKS), 248-252 (DTAGV), and 313-316 (NKWD) each bind GTP. The KH-like domain maps to 369–453 (KRINTSMLTR…PIKVEFREGA (85 aa)).

It belongs to the TRAFAC class TrmE-Era-EngA-EngB-Septin-like GTPase superfamily. EngA (Der) GTPase family. In terms of assembly, associates with the 50S ribosomal subunit.

GTPase that plays an essential role in the late steps of ribosome biogenesis. This chain is GTPase Der, found in Pseudoalteromonas atlantica (strain T6c / ATCC BAA-1087).